The chain runs to 145 residues: Conglutin (145 aa).

Positions 1–21 (MAKSTILVALLALVLVAHASA) are cleaved as a signal peptide. Disulfide bonds link Cys-35–Cys-92, Cys-47–Cys-79, Cys-80–Cys-128, Cys-94–Cys-136, and Cys-105–Cys-145.

The protein belongs to the 2S seed storage albumins family. In terms of tissue distribution, expressed in seeds. Not expressed in roots, pegs (budding ovaries) or leaves.

In Arachis hypogaea (Peanut), this protein is Conglutin.